We begin with the raw amino-acid sequence, 565 residues long: Ubiquitin carboxyl-terminal hydrolase 39 (565 aa).

Basic and acidic residues-rich tracts occupy residues 1–21 (MSGR…ESES) and 28–39 (VKRERDREREPE). Disordered regions lie at residues 1–61 (MSGR…SARE) and 75–96 (EREV…GRVD). At S46 the chain carries Phosphoserine. K51 is covalently cross-linked (Glycyl lysine isopeptide (Lys-Gly) (interchain with G-Cter in SUMO2)). S82 is modified (phosphoserine). Basic and acidic residues predominate over residues 85–96 (EREVRAKNGRVD). The UBP-type; degenerate zinc-finger motif lies at 103–200 (RHCPYLDTIN…YVLKPTFTKQ (98 aa)). The Zn(2+) site is built by C136, C139, H155, and H161. Residues 225-555 (VGLNNIKAND…EAYIQIWKRR (331 aa)) enclose the USP domain.

This sequence belongs to the peptidase C19 family. As to quaternary structure, the U4/U6-U5 tri-snRNP complex is a building block of the precatalytic spliceosome (spliceosome B complex). Component of the U4/U6-U5 tri-snRNP complex composed of the U4, U6 and U5 snRNAs and at least PRPF3, PRPF4, PRPF6, PRPF8, PRPF31, SNRNP200, TXNL4A, SNRNP40, SNRPB, SNRPD1, SNRPD2, SNRPD3, SNRPE, SNRPF, SNRPG, DDX23, CD2BP2, PPIH, SNU13, EFTUD2, SART1 and USP39, plus LSM2, LSM3, LSM4, LSM5, LSM6, LSM7 and LSM8.

The protein resides in the nucleus. It catalyses the reaction Thiol-dependent hydrolysis of ester, thioester, amide, peptide and isopeptide bonds formed by the C-terminal Gly of ubiquitin (a 76-residue protein attached to proteins as an intracellular targeting signal).. In terms of biological role, deubiquitinating enzyme that plays a role in many cellular processes including cellular antiviral response, epithelial morphogenesis, DNA repair or B-cell development. Plays a role in pre-mRNA splicing as a component of the U4/U6-U5 tri-snRNP, one of the building blocks of the precatalytic spliceosome. Specifically regulates immunoglobulin gene rearrangement in a spliceosome-dependent manner, which involves modulating chromatin interactions at the Igh locus and therefore plays an essential role in B-cell development. Regulates AURKB mRNA levels, and thereby plays a role in cytokinesis and in the spindle checkpoint. Regulates apoptosis and G2/M cell cycle checkpoint in response to DNA damage by deubiquitinating and stabilizing CHK2. Also plays an important role in DNA repair by controlling the recruitment of XRCC4/LIG4 to DNA double-strand breaks for non-homologous end-joining repair. Participates in antiviral activity by affecting the type I IFN signaling by stabilizing STAT1 and decreasing its 'Lys-6'-linked ubiquitination. Contributes to non-canonical Wnt signaling during epidermal differentiation. Acts as a negative regulator NF-kappa-B activation through deubiquitination of 'Lys-48'-linked ubiquitination of NFKBIA. This is Ubiquitin carboxyl-terminal hydrolase 39 (USP39) from Pongo abelii (Sumatran orangutan).